Consider the following 411-residue polypeptide: S-inosyl-L-homocysteine hydrolase (411 aa).

The substrate site is built by Asp121 and Glu146. NAD(+) is bound at residue 147-149; sequence TTT. Residues Lys176 and Asp180 each coordinate substrate. NAD(+) contacts are provided by residues Asn181, 210-215, Glu233, Asn268, 289-291, and Asn335; these read GYGWCG and SGH.

Belongs to the adenosylhomocysteinase family. NAD(+) serves as cofactor.

The protein localises to the cytoplasm. The enzyme catalyses S-inosyl-L-homocysteine + H2O = L-homocysteine + inosine. It functions in the pathway amino-acid biosynthesis; S-adenosyl-L-methionine biosynthesis. Catalyzes the hydrolysis of S-inosyl-L-homocysteine (SIH) to L-homocysteine (Hcy) and inosine. Likely functions in a S-adenosyl-L-methionine (SAM) recycling pathway from S-adenosyl-L-homocysteine (SAH) produced from SAM-dependent methylation reactions. Can also catalyze the reverse reaction in vitro, i.e. the synthesis of SIH from Hcy and inosine. This is S-inosyl-L-homocysteine hydrolase from Methanosarcina acetivorans (strain ATCC 35395 / DSM 2834 / JCM 12185 / C2A).